The sequence spans 821 residues: Spindle apparatus protein lin-5 (821 aa).

The interval 161–199 is disordered; that stretch reads EASSGFRTPKRNNYSLTSLQTPTATARRLRTASSTARRS. Residues 162–180 are compositionally biased toward polar residues; the sequence is ASSGFRTPKRNNYSLTSLQ. Residues 181–199 show a composition bias toward low complexity; sequence TPTATARRLRTASSTARRS. Positions 211 to 634 form a coiled coil; the sequence is KFMRSERELK…REKESAEIKK (424 aa). Disordered stretches follow at residues 736-758 and 779-821; these read RSES…FTPS and LKCS…SKKQ.

As to quaternary structure, interacts with gpr-1; gpr-1 forms a complex with gpr-2 and GDP-bound goa-1.

Its subcellular location is the cytoplasm. The protein localises to the cell cortex. It localises to the cytoskeleton. The protein resides in the spindle. It is found in the chromosome. Its subcellular location is the centromere. The protein localises to the kinetochore. It localises to the microtubule organizing center. The protein resides in the centrosome. Functionally, essential component of the spindle apparatus required for spindle positioning and chromosome movement. Acts to recruit or anchor gpr-1/gpr-2 complex to the spindle and cortex. Also involved, directly or indirectly, in cytokinesis and in the coupling of DNA replication, centrosome duplication and mitotic division. The sequence is that of Spindle apparatus protein lin-5 (lin-5) from Caenorhabditis elegans.